The chain runs to 252 residues: Large ribosomal subunit protein uL29m (252 aa).

Position 146 is an N6-acetyllysine (K146). Basic residues predominate over residues 230 to 240; it reads KKKEKILHAKF. The disordered stretch occupies residues 230 to 252; the sequence is KKKEKILHAKFPHLSQERKSSSV.

Belongs to the universal ribosomal protein uL29 family. As to quaternary structure, component of the mitochondrial ribosome large subunit (39S) which comprises a 16S rRNA and about 50 distinct proteins.

Its subcellular location is the mitochondrion. The polypeptide is Large ribosomal subunit protein uL29m (Mrpl47) (Mus musculus (Mouse)).